The primary structure comprises 322 residues: Phthalate dioxygenase reductase (322 aa).

An FAD-binding FR-type domain is found at 7 to 109; the sequence is DGFLRLKIAS…SLPRNEFPLD (103 aa). FMN-binding positions include 56–57, 73–75, 81–84, Thr125, and Phe226; these read RT, AVK, and RGGS. The 84-residue stretch at 239-322 folds into the 2Fe-2S ferredoxin-type domain; that stretch reads FTVRLSRSGT…AKSAELVLDL (84 aa). Cys273 is a binding site for [2Fe-2S] cluster. Residue Ser275 coordinates FMN. [2Fe-2S] cluster is bound by residues Cys278, Cys281, and Cys309.

This sequence belongs to the PDR/VanB family. As to quaternary structure, monomer. FMN serves as cofactor.

In terms of biological role, component of the electron transfer chain involved in pyridine nucleotide-dependent dihydroxylation of phthalate. Utilizes FMN to mediate electron transfer from the two-electron donor, NADH, to the one-electron acceptor, (2Fe-2S). In Burkholderia cepacia (Pseudomonas cepacia), this protein is Phthalate dioxygenase reductase (ophA1).